The primary structure comprises 804 residues: G-type lectin S-receptor-like serine/threonine-protein kinase At1g61500 (804 aa).

Positions 1 to 24 (MMTRFACLHLFTMFLFTLLSGSSS) are cleaved as a signal peptide. Positions 25–145 (AVITTESPLS…VSERALWQSF (121 aa)) constitute a Bulb-type lectin domain. At 25 to 427 (AVITTESPLS…ELDGNKRKKT (403 aa)) the chain is on the extracellular side. N-linked (GlcNAc...) asparagine glycosylation is found at N54, N135, and N237. Residues 279–315 (PKKLCDFYGACGPFGLCVMSPSPMCKCFRGFVPKSVE) enclose the EGF-like; atypical domain. Disulfide bonds link C283-C295 and C289-C303. Residues N321, N337, and N376 are each glycosylated (N-linked (GlcNAc...) asparagine). One can recognise a PAN domain in the interval 334–416 (CLGNSTGEDA…GELLSIRLAR (83 aa)). 2 cysteine pairs are disulfide-bonded: C369–C390 and C373–C379. A helical transmembrane segment spans residues 428–448 (IVASIVSLTLFMILGFTAFGV). Residues 449–804 (WRCRVEHIAH…GMTQSVILGR (356 aa)) are Cytoplasmic-facing. Residues 491–776 (FSLSNKLGQG…DLPSPKQPTF (286 aa)) enclose the Protein kinase domain. ATP is bound by residues 497-505 (LGQGGFGSV) and K519. Phosphoserine is present on residues S525 and S540. Residues 580-597 (RKRLEIDWPKRFDIIQGI) are caM-binding. D616 serves as the catalytic Proton acceptor. Phosphoserine occurs at positions 620 and 633. A Phosphothreonine modification is found at T650. Residues S693 and S787 each carry the phosphoserine modification.

This sequence belongs to the protein kinase superfamily. Ser/Thr protein kinase family.

The protein localises to the cell membrane. It carries out the reaction L-seryl-[protein] + ATP = O-phospho-L-seryl-[protein] + ADP + H(+). The catalysed reaction is L-threonyl-[protein] + ATP = O-phospho-L-threonyl-[protein] + ADP + H(+). The sequence is that of G-type lectin S-receptor-like serine/threonine-protein kinase At1g61500 from Arabidopsis thaliana (Mouse-ear cress).